The primary structure comprises 659 residues: QWRF motif-containing protein 2 (659 aa).

5 disordered regions span residues 1–125 (MVAA…SVTV), 157–221 (SKKK…LDCG), 291–317 (DTDS…ISKS), 340–359 (RLQD…TSSI), and 371–429 (SDAV…NAYN). Residues 42-72 (SPSPSHSVSSTTTTTTTTTTTTSSSSSSSSS) are compositionally biased toward low complexity. Residues 90-102 (RSTTNSASNSIKT) show a composition bias toward polar residues. Residues 172–190 (STPERRRSTPVRDQRENSK) show a composition bias toward basic and acidic residues. 2 stretches are compositionally biased toward polar residues: residues 206-216 (SESVVPNSLSR) and 291-303 (DTDS…TNGV). Composition is skewed to low complexity over residues 345 to 359 (GSPL…TSSI) and 401 to 418 (ATTT…SRAR). The QWRF motif motif lies at 468–471 (QWRF).

This sequence belongs to the QWRF family.

This Arabidopsis thaliana (Mouse-ear cress) protein is QWRF motif-containing protein 2 (QWRF2).